The sequence spans 429 residues: 3-phosphoshikimate 1-carboxyvinyltransferase (429 aa).

Residues Lys-23, Ser-24, and Arg-28 each coordinate 3-phosphoshikimate. Lys-23 lines the phosphoenolpyruvate pocket. Residues Gly-97 and Arg-125 each coordinate phosphoenolpyruvate. 3-phosphoshikimate-binding residues include Ser-170, Ser-171, Gln-172, Ser-198, Asp-314, Asn-338, and Lys-342. Position 172 (Gln-172) interacts with phosphoenolpyruvate. Asp-314 serves as the catalytic Proton acceptor. Positions 346, 388, and 413 each coordinate phosphoenolpyruvate.

Belongs to the EPSP synthase family. In terms of assembly, monomer.

The protein resides in the cytoplasm. The enzyme catalyses 3-phosphoshikimate + phosphoenolpyruvate = 5-O-(1-carboxyvinyl)-3-phosphoshikimate + phosphate. It participates in metabolic intermediate biosynthesis; chorismate biosynthesis; chorismate from D-erythrose 4-phosphate and phosphoenolpyruvate: step 6/7. Catalyzes the transfer of the enolpyruvyl moiety of phosphoenolpyruvate (PEP) to the 5-hydroxyl of shikimate-3-phosphate (S3P) to produce enolpyruvyl shikimate-3-phosphate and inorganic phosphate. The chain is 3-phosphoshikimate 1-carboxyvinyltransferase from Pectobacterium atrosepticum (strain SCRI 1043 / ATCC BAA-672) (Erwinia carotovora subsp. atroseptica).